The primary structure comprises 398 residues: 1-deoxy-D-xylulose 5-phosphate reductoisomerase (398 aa).

The NADPH site is built by Thr-11, Gly-12, Ser-13, Ile-14, and Asn-125. 1-deoxy-D-xylulose 5-phosphate is bound at residue Lys-126. Glu-127 serves as a coordination point for NADPH. Asp-151 is a Mn(2+) binding site. The 1-deoxy-D-xylulose 5-phosphate site is built by Ser-152, Glu-153, Ser-186, and His-209. Glu-153 contributes to the Mn(2+) binding site. Position 215 (Gly-215) interacts with NADPH. The 1-deoxy-D-xylulose 5-phosphate site is built by Ser-222, Asn-227, Lys-228, and Glu-231. Glu-231 serves as a coordination point for Mn(2+).

It belongs to the DXR family. The cofactor is Mg(2+). Mn(2+) is required as a cofactor.

The enzyme catalyses 2-C-methyl-D-erythritol 4-phosphate + NADP(+) = 1-deoxy-D-xylulose 5-phosphate + NADPH + H(+). It participates in isoprenoid biosynthesis; isopentenyl diphosphate biosynthesis via DXP pathway; isopentenyl diphosphate from 1-deoxy-D-xylulose 5-phosphate: step 1/6. In terms of biological role, catalyzes the NADPH-dependent rearrangement and reduction of 1-deoxy-D-xylulose-5-phosphate (DXP) to 2-C-methyl-D-erythritol 4-phosphate (MEP). In Acinetobacter baylyi (strain ATCC 33305 / BD413 / ADP1), this protein is 1-deoxy-D-xylulose 5-phosphate reductoisomerase.